The sequence spans 601 residues: Replication protein A 70 kDa DNA-binding subunit (601 aa).

The interval 107–172 (MPGKIGDPTP…NTPGGSSKVV (66 aa)) is disordered. A compositionally biased stretch (low complexity) spans 124 to 135 (APSTAPAPTARP). Residues 137-153 (QPQNGSDGSTYRPSAQS) are compositionally biased toward polar residues. Residues 184-268 (WTIRARVTNK…LKNDYEMTLN (85 aa)) constitute a DNA-binding region (OB). S370 is modified (phosphoserine). The C4-type zinc finger occupies 466–488 (CPSKDCNKKVVDQQNGMFRCEKC).

The protein belongs to the replication factor A protein 1 family. Component of the heterotrimeric canonical replication protein A complex (RPA).

Its subcellular location is the nucleus. It is found in the PML body. As part of the heterotrimeric replication protein A complex (RPA/RP-A), binds and stabilizes single-stranded DNA intermediates, that form during DNA replication or upon DNA stress. It prevents their reannealing and in parallel, recruits and activates different proteins and complexes involved in DNA metabolism. Thereby, it plays an essential role both in DNA replication and the cellular response to DNA damage. The chain is Replication protein A 70 kDa DNA-binding subunit (rpa1) from Danio rerio (Zebrafish).